A 390-amino-acid chain; its full sequence is Probable NADH-dependent butanol dehydrogenase 2 (390 aa).

The protein belongs to the iron-containing alcohol dehydrogenase family.

It participates in alcohol metabolism; butanol biosynthesis. This is Probable NADH-dependent butanol dehydrogenase 2 (yugK) from Bacillus subtilis (strain 168).